The chain runs to 788 residues: MSDQDSSTSSTSFPKYLEHLSGDGKAIGVLTSGGDAQGMNAAVRAVVRMGIYTGAKVYFIYEGYQGMVDGGSNIVEAKWECVSSILQVGGTIIGSARCQAFRSREGRLKAACNLVRLGITNLCVIGGDGSLTGANLFRKEWSGLLEELAKNGEIDSDTVKKHAYLNVVGMVGSIDNDFCGTDMTIGTDSALHRIIEVVDAIMTTAQSHQRTFVLEVMGRHCGYLALVSALACGADWVFLPESPPEEGWEEEMCLKLSENRARKKRLNIIIVSEGAIDTQNKPITSEKIKELVVTNLGFDTRVTILGHVQRGGTPSAFDRILASRMGVEAVLALLEATPETPACVVSLRGNQAVRLPLMECVQMTQDVQKAMDERRFDEAVKLRGRSFEGNLNTYKRLAIKEPDDKIPKSNCNVAIINVGAPAAGMNAAVRSAVRVGIAEGHKMFAIYDGFDGLANGQIKEIGWGDVGGWTGQGGSILGTKRTLPGKYLEKIAEQMHSKNINALLIIGGFEAYLGLLELAAARNKHEAFCVPMVMVPATVSNNVPGSDFSIGADTALNTITDTCDRIKQSASGTKRRVFIIETMGGYCGYLANMGGLAAGADAAYIFEEQFDIRDLQSNVMHLTEKMKTSIQRGLVLRNENCSVNYTTDFIYQLYSEEGKGVFDCRKNVLGHMQQGGAPSPFDRNFGTKISAKAMEWISAKLKGSHGTGKKFVSDDSICVLGIQKRDLLFKPVAELRKATDFEHRIPKQQWWLKLRPIMKILAKYEASYDMSDVGKLEPVHNHGELSAI.

The residue at position 1 (Met1) is an N-acetylmethionine. The interval 1-399 is N-terminal catalytic PFK domain 1; it reads MSDQDSSTSS…NLNTYKRLAI (399 aa). Phosphoserine is present on residues Ser2, Ser6, Ser12, and Ser21. Residues Gly34, 97-98, and 127-130 each bind ATP; these read RC and GDGS. Asp128 contributes to the Mg(2+) binding site. Phosphoserine is present on Ser142. Substrate contacts are provided by residues 173-175, Arg210, 217-219, Glu273, Arg301, and 307-310; these read SID, MGR, and HVQR. Asp175 acts as the Proton acceptor in catalysis. Position 386 is a phosphoserine (Ser386). At Lys395 the chain carries N6-acetyllysine. The tract at residues 400–411 is interdomain linker; it reads KEPDDKIPKSNC. Residues 412–788 are C-terminal regulatory PFK domain 2; sequence NVAIINVGAP…VHNHGELSAI (377 aa). Arg481 lines the beta-D-fructose 2,6-bisphosphate pocket. Position 486 is an N6-acetyllysine (Lys486). Beta-D-fructose 2,6-bisphosphate contacts are provided by residues 538-542, Arg576, 583-585, and Glu639; these read TVSNN and MGG. Ser540 is a glycosylation site (O-linked (GlcNAc) serine). Residue Tyr651 is modified to Phosphotyrosine. Residues Arg665 and 671–674 each bind beta-D-fructose 2,6-bisphosphate; that span reads HMQQ. At Lys688 the chain carries N6-acetyllysine. Arg744 contributes to the beta-D-fructose 2,6-bisphosphate binding site.

It belongs to the phosphofructokinase type A (PFKA) family. ATP-dependent PFK group I subfamily. Eukaryotic two domain clade 'E' sub-subfamily. Homo- and heterotetramers. Phosphofructokinase (PFK) enzyme functions as a tetramer composed of different combinations of 3 types of subunits, called PFKM (M), PFKL (L) and PFKP (P). The composition of the PFK tetramer differs according to the tissue type it is present in. The kinetic and regulatory properties of the tetrameric enzyme are dependent on the subunit composition, hence can vary across tissues. Interacts with ATG4B; promoting phosphorylation of ATG4B. Requires Mg(2+) as cofactor. Post-translationally, glcNAcylation decreases enzyme activity. Phosphorylation at Ser-386 promotes interaction with ATG4B. In terms of tissue distribution, expressed at high level in neuroendocrine tissues.

It is found in the cytoplasm. It carries out the reaction beta-D-fructose 6-phosphate + ATP = beta-D-fructose 1,6-bisphosphate + ADP + H(+). Its pathway is carbohydrate degradation; glycolysis; D-glyceraldehyde 3-phosphate and glycerone phosphate from D-glucose: step 3/4. With respect to regulation, allosterically activated by ADP, AMP, or fructose 2,6-bisphosphate, and allosterically inhibited by ATP or citrate. Catalyzes the phosphorylation of D-fructose 6-phosphate to fructose 1,6-bisphosphate by ATP, the first committing step of glycolysis. In Rattus norvegicus (Rat), this protein is ATP-dependent 6-phosphofructokinase, platelet type (Pfkp).